The sequence spans 721 residues: MTQSSPLKTQQMQVGGMDCTSCKLKIEGSLERLKGVAEASVTVATGRLTVTYDPKQVSEITIQERIAALGYTLAEPKSSVTLNGHKHPHSHREEGHSHSHGAGEFNLKQELLPVLTAIALFTIAILFEQPLHNTPGQIAEFAVIIPAYLLSGWTVLKTAGRNILRGQIFDENFLMTIATLGALAIHQLPEAVAVMLFFRVGELFQEYSVGRSRRSIKALLEARPDTANLKRNGTVQQVSPETVQVDDLILVKPGEKVPLDGEILGGTSQVDTSALTGESVPGTVKPGDTILAGMINQSGVLTIRVTKLFSESSIAKVLDLVENASSKKASTEKFITQFARYYTPVIVFLSLAVALLPPLFIPGADRADWVYRALVLLVISCPCGLVISIPLGYFGGIGGAAKHGILIKGSTFLDSLTAVKTVVFDKTGTLTKGTFKVTQVVTKNGFSESELLTLAAKAESHSTHPIALSIREAYAQSIADSEVADYEEIAGHGIRAVVQNQVVIAGNDRLLHREKIDHDTCDVAGTVVHLAVDGRYGGYILIADEIKEDAVQAIRDLKRMGVEKTVMLTGDSEIVAQSVAQQIGLDAFVAELLPEEKVDEIEQLLDPSGKAKLAFVGDGINDAPVIARADVGIAMGGLGSDAAIETADVVLMTDAPSKVAEAIHVARKTRQIVVQNIVLALGIKALFIALGTIGLATLWEAVFADVGVALLAILNATRIAK.

Residues methionine 1–leucine 107 lie on the Cytoplasmic side of the membrane. Residues lysine 8 to alanine 74 form the HMA domain. Positions 19 and 22 each coordinate Zn(2+). The interval valine 80–glycine 101 is disordered. The chain crosses the membrane as a helical span at residues lysine 108 to glutamate 128. Residues glutamine 129–glutamate 140 are Extracellular-facing. Residues phenylalanine 141–glycine 160 traverse the membrane as a helical segment. Residues arginine 161–glutamine 167 lie on the Cytoplasmic side of the membrane. Residues isoleucine 168–glutamine 187 traverse the membrane as a helical segment. The Extracellular portion of the chain corresponds to leucine 188 to glutamate 190. A helical transmembrane segment spans residues alanine 191–glycine 210. Residues arginine 211–proline 344 lie on the Cytoplasmic side of the membrane. A helical transmembrane segment spans residues valine 345–glycine 363. Over alanine 364–tryptophan 369 the chain is Extracellular. The chain crosses the membrane as a helical span at residues valine 370–isoleucine 387. Residues serine 388 to glutamine 671 lie on the Cytoplasmic side of the membrane. Aspartate 425 serves as the catalytic 4-aspartylphosphate intermediate. Mg(2+) is bound by residues aspartate 618 and aspartate 622. A helical transmembrane segment spans residues isoleucine 672–isoleucine 693. Residues glycine 694–alanine 701 lie on the Extracellular side of the membrane. The helical transmembrane segment at valine 702 to threonine 717 threads the bilayer. At arginine 718–lysine 721 the chain is on the cytoplasmic side.

Belongs to the cation transport ATPase (P-type) (TC 3.A.3) family. Type IB subfamily.

The protein resides in the cell membrane. The enzyme catalyses Zn(2+)(in) + ATP + H2O = Zn(2+)(out) + ADP + phosphate + H(+). The protein is Zinc-transporting ATPase (ziaA) of Synechocystis sp. (strain ATCC 27184 / PCC 6803 / Kazusa).